A 692-amino-acid polypeptide reads, in one-letter code: UvrABC system protein B (692 aa).

In terms of domain architecture, Helicase ATP-binding spans 32-418 (DNIENGEKAQ…QTDTIVEQII (387 aa)). 45–52 (GATGTGKT) contacts ATP. Residues 98–121 (YYDYYQPEAYVPSSDTYIEKDSSV) carry the Beta-hairpin motif. Positions 436 to 631 (QIDDLVGEIH…TIKKEIRDLI (196 aa)) constitute a Helicase C-terminal domain. A UVR domain is found at 656–691 (KALVKKLEKEMQQAASALDFEGAAQLRDMVLELRAM).

This sequence belongs to the UvrB family. Forms a heterotetramer with UvrA during the search for lesions. Interacts with UvrC in an incision complex.

Its subcellular location is the cytoplasm. The UvrABC repair system catalyzes the recognition and processing of DNA lesions. A damage recognition complex composed of 2 UvrA and 2 UvrB subunits scans DNA for abnormalities. Upon binding of the UvrA(2)B(2) complex to a putative damaged site, the DNA wraps around one UvrB monomer. DNA wrap is dependent on ATP binding by UvrB and probably causes local melting of the DNA helix, facilitating insertion of UvrB beta-hairpin between the DNA strands. Then UvrB probes one DNA strand for the presence of a lesion. If a lesion is found the UvrA subunits dissociate and the UvrB-DNA preincision complex is formed. This complex is subsequently bound by UvrC and the second UvrB is released. If no lesion is found, the DNA wraps around the other UvrB subunit that will check the other stand for damage. The sequence is that of UvrABC system protein B from Lactococcus lactis subsp. lactis (strain IL1403) (Streptococcus lactis).